We begin with the raw amino-acid sequence, 247 residues long: DNA polymerase sliding clamp (247 aa).

It belongs to the PCNA family. As to quaternary structure, homotrimer. The subunits circularize to form a toroid; DNA passes through its center. Replication factor C (RFC) is required to load the toroid on the DNA.

Functionally, sliding clamp subunit that acts as a moving platform for DNA processing. Responsible for tethering the catalytic subunit of DNA polymerase and other proteins to DNA during high-speed replication. In Halobacterium salinarum (strain ATCC 29341 / DSM 671 / R1), this protein is DNA polymerase sliding clamp.